A 489-amino-acid polypeptide reads, in one-letter code: Heme-based aerotactic transducer HemAT (489 aa).

In terms of domain architecture, Methyl-accepting transducer spans proline 218–aspartate 454.

It belongs to the methyl-accepting chemotaxis (MCP) protein family. Homotetramer.

Heme-containing signal transducer responsible for aerotaxis, the migratory response toward or away from oxygen. The protein is Heme-based aerotactic transducer HemAT (hemAT) of Halobacterium salinarum (strain ATCC 700922 / JCM 11081 / NRC-1) (Halobacterium halobium).